The following is a 153-amino-acid chain: Large ribosomal subunit protein bL9 (153 aa).

The protein belongs to the bacterial ribosomal protein bL9 family.

Its function is as follows. Binds to the 23S rRNA. The polypeptide is Large ribosomal subunit protein bL9 (Koribacter versatilis (strain Ellin345)).